Reading from the N-terminus, the 552-residue chain is MRLLPLAPGRLRRGSPRHLPSCSPALLLLVLGGCLGVFGVAAGTRRPNVVLLLTDDQDEVLGGMTPLKKTKALIGEMGMTFSSAYVPSALCCPSRASILTGKYPHNHHVVNNTLEGNCSSKSWQKIQEPNTFPAILRSMCGYQTFFAGKYLNEYGAPDAGGLEHVPLGWSYWYALEKNSKYYNYTLSINGKARKHGENYSVDYLTDVLANVSLDFLDYKSNFEPFFMMIATPAPHSPWTAAPQYQKAFQNVFAPRNKNFNIHGTNKHWLIRQAKTPMTNSSIQFLDNAFRKRWQTLLSVDDLVEKLVKRLEFTGELNNTYIFYTSDNGYHTGQFSLPIDKRQLYEFDIKVPLLVRGPGIKPNQTSKMLVANIDLGPTILDIAGYDLNKTQMDGMSLLPILRGASNLTWRSDVLVEYQGEGRNVTDPTCPSLSPGVSQCFPDCVCEDAYNNTYACVRTMSALWNLQYCEFDDQEVFVEVYNLTADPDQITNIAKTIDPELLGKMNYRLMMLQSCSGPTCRTPGVFDPGYRFDPRLMFSNRGSVRTRRFSKHLL.

Positions 1–36 are cleaved as a signal peptide; that stretch reads MRLLPLAPGRLRRGSPRHLPSCSPALLLLVLGGCLG. Residues aspartate 55, aspartate 56, and cysteine 91 each contribute to the Ca(2+) site. The active-site Nucleophile is the cysteine 91. Cysteine 91 carries the post-translational modification 3-oxoalanine (Cys). N-linked (GlcNAc...) asparagine glycans are attached at residues asparagine 111, asparagine 117, asparagine 183, asparagine 198, asparagine 210, asparagine 279, and asparagine 317. Aspartate 326 and asparagine 327 together coordinate Ca(2+). N-linked (GlcNAc...) asparagine glycosylation is found at asparagine 362, asparagine 387, asparagine 405, asparagine 422, asparagine 449, and asparagine 480. Serine 541 bears the Phosphoserine mark.

This sequence belongs to the sulfatase family. Requires Ca(2+) as cofactor. The form A (78 kDa) is processed by internal peptidase cleavage to a 32 kDa N-terminal species (form B) and a 48 kDa C-terminal species. In terms of processing, the conversion to 3-oxoalanine (also known as C-formylglycine, FGly), of a serine or cysteine residue in prokaryotes and of a cysteine residue in eukaryotes, is critical for catalytic activity.

The protein resides in the lysosome. The catalysed reaction is Hydrolysis of the 6-sulfate groups of the N-acetyl-D-glucosamine 6-sulfate units of heparan sulfate and keratan sulfate.. In terms of biological role, hydrolyzes 6-sulfate groups in N-acetyl-d-glucosaminide units of heparin sulfate and keratan sulfate. The protein is N-acetylglucosamine-6-sulfatase (GNS) of Homo sapiens (Human).